The following is a 480-amino-acid chain: Zinc finger protein ztf-16 (480 aa).

A C2H2-type 1 zinc finger spans residues 5–27 (NACTECGFTTTVFSEFQGHIEKH). The segment at 25–75 (EKHENEHSRSSSGEMSNSQTIEWGDGIQSSTPSPRSTPPSDPTPSPDSDEH) is disordered. Positions 34 to 45 (SSSGEMSNSQTI) are enriched in polar residues. The segment covering 59-69 (RSTPPSDPTPS) has biased composition (pro residues). 5 C2H2-type zinc fingers span residues 103–125 (HVCPHCNFTTCMSQHMKSHLEAH), 133–155 (YQCDICKMQFSQKANMHRHRMRH), 161–183 (YECRFCKKRFFRKDQMQEHSMTH), 190–215 (FDCPVSQCNMQFSQHNALRAHLEETH), and 223–246 (ASCKRCNLMFANSRRLLLHFQTRH). 3 disordered regions span residues 243–275 (QTRHDDSESSPKKENTPKRKKLSNGNALPMDPA), 290–311 (EFSPPNTDTSDNSTSSEFDKIP), and 376–417 (TSSS…KEDE). The segment covering 244–259 (TRHDDSESSPKKENTP) has biased composition (basic and acidic residues). 2 stretches are compositionally biased toward low complexity: residues 292-305 (SPPNTDTSDNSTSS) and 376-403 (TSSSVSVSAPSPSEQSHSPPANESSLSL). Positions 404–413 (TEKEKSPTPE) are enriched in basic and acidic residues. 2 C2H2-type zinc fingers span residues 420-442 (VECCHCGMMFYDNTMYLLHKSLH) and 448-472 (FKCALCGTQCGEKYMFTTHVIFADH).

It belongs to the Ikaros C2H2-type zinc-finger protein family. As to expression, expressed in the somatic gonad, hypodermis and cells in the head and tail. Expressed in amphid and phasmid sheath glia, amphid and phasmid socket glia, and in neurons in the head.

It is found in the nucleus. Functionally, positively regulates the expression of ver-1 in the amphid sheath glia of amphid sensory neurons. Together with ehn-3, plays a role in somatic gonad development and is required for proper gonadal primordium assembly and somatic gonad precursor cell morphology. The chain is Zinc finger protein ztf-16 from Caenorhabditis elegans.